We begin with the raw amino-acid sequence, 507 residues long: ATP synthase subunit alpha, mitochondrial (507 aa).

171–178 is an ATP binding site; that stretch reads GDRQTGKT.

The protein belongs to the ATPase alpha/beta chains family. As to quaternary structure, F-type ATPases have 2 components, CF(1) - the catalytic core - and CF(0) - the membrane proton channel. CF(1) has five subunits: alpha(3), beta(3), gamma(1), delta(1), epsilon(1). CF(0) has three main subunits: a, b and c.

It localises to the mitochondrion. It is found in the mitochondrion inner membrane. Functionally, mitochondrial membrane ATP synthase (F(1)F(0) ATP synthase or Complex V) produces ATP from ADP in the presence of a proton gradient across the membrane which is generated by electron transport complexes of the respiratory chain. F-type ATPases consist of two structural domains, F(1) - containing the extramembraneous catalytic core, and F(0) - containing the membrane proton channel, linked together by a central stalk and a peripheral stalk. During catalysis, ATP synthesis in the catalytic domain of F(1) is coupled via a rotary mechanism of the central stalk subunits to proton translocation. Subunits alpha and beta form the catalytic core in F(1). Rotation of the central stalk against the surrounding alpha(3)beta(3) subunits leads to hydrolysis of ATP in three separate catalytic sites on the beta subunits. Subunit alpha does not bear the catalytic high-affinity ATP-binding sites. This Raphanus sativus (Radish) protein is ATP synthase subunit alpha, mitochondrial (ATPA).